Reading from the N-terminus, the 92-residue chain is Plasmid copy control protein CopR (92 aa).

Positions 1-27 (MELAFRESLKKMRGTKSKEKFSQELEM) are enriched in basic and acidic residues. 2 disordered regions span residues 1-40 (MELA…SGKS) and 63-92 (IPNE…NDFV). Positions 9–62 (LKKMRGTKSKEKFSQELEMSRSNYSRIESGKSDPTIKTLEQIVKLTNSTLVVDL) constitute an HTH cro/C1-type domain. The H-T-H motif DNA-binding region spans 20 to 39 (KFSQELEMSRSNYSRIESGK).

Functionally, involved in copy control of plasmid pIP501. The protein is Plasmid copy control protein CopR (copR) of Streptococcus agalactiae.